The following is a 412-amino-acid chain: Alanyl-tRNA editing protein Aarsd1 (412 aa).

Zn(2+) is bound by residues His-108, His-112, Cys-208, and His-212.

It belongs to the class-II aminoacyl-tRNA synthetase family. Alax-L subfamily. It depends on Zn(2+) as a cofactor.

It is found in the cytoplasm. In terms of biological role, functions in trans to edit the amino acid moiety from incorrectly charged tRNA(Ala). This Danio rerio (Zebrafish) protein is Alanyl-tRNA editing protein Aarsd1 (aarsd1).